The sequence spans 667 residues: Long-chain-fatty-acid--CoA ligase ACSBG2 (667 aa).

Residues 1–14 (MTQEKKAEDPDRGM) are compositionally biased toward basic and acidic residues. The interval 1 to 20 (MTQEKKAEDPDRGMDTTSAA) is disordered. Residues 227–235 (TSGTTGSPK), 418–423 (EIYGMT), Asp496, Arg511, and Arg624 contribute to the ATP site.

It belongs to the ATP-dependent AMP-binding enzyme family. Bubblegum subfamily.

The protein resides in the cytoplasm. Its subcellular location is the membrane. It carries out the reaction a long-chain fatty acid + ATP + CoA = a long-chain fatty acyl-CoA + AMP + diphosphate. It catalyses the reaction (5Z,8Z,11Z,14Z)-eicosatetraenoate + ATP + CoA = (5Z,8Z,11Z,14Z)-eicosatetraenoyl-CoA + AMP + diphosphate. The enzyme catalyses hexadecanoate + ATP + CoA = hexadecanoyl-CoA + AMP + diphosphate. The catalysed reaction is (9Z)-octadecenoate + ATP + CoA = (9Z)-octadecenoyl-CoA + AMP + diphosphate. It carries out the reaction (9Z,12Z)-octadecadienoate + ATP + CoA = (9Z,12Z)-octadecadienoyl-CoA + AMP + diphosphate. It catalyses the reaction tetracosanoate + ATP + CoA = tetracosanoyl-CoA + AMP + diphosphate. Catalyzes the conversion of fatty acids such as long chain and very long-chain fatty acids to their active form acyl-CoAs for both synthesis of cellular lipids, and degradation via beta-oxidation. Can activate diverse saturated, monosaturated and polyunsaturated fatty acids. Has increased ability to activate oleic and linoleic acid. May play a role in spermatogenesis. The polypeptide is Long-chain-fatty-acid--CoA ligase ACSBG2 (Rattus norvegicus (Rat)).